Here is a 435-residue protein sequence, read N- to C-terminus: Tol-Pal system protein TolB (435 aa).

Positions 1–26 (MKIFSPIRLVLAIAALMSVFSAPAFA) are cleaved as a signal peptide.

This sequence belongs to the TolB family. The Tol-Pal system is composed of five core proteins: the inner membrane proteins TolA, TolQ and TolR, the periplasmic protein TolB and the outer membrane protein Pal. They form a network linking the inner and outer membranes and the peptidoglycan layer.

The protein localises to the periplasm. Part of the Tol-Pal system, which plays a role in outer membrane invagination during cell division and is important for maintaining outer membrane integrity. This Agrobacterium fabrum (strain C58 / ATCC 33970) (Agrobacterium tumefaciens (strain C58)) protein is Tol-Pal system protein TolB.